A 707-amino-acid polypeptide reads, in one-letter code: Polyribonucleotide nucleotidyltransferase (707 aa).

Residues Asp485 and Asp491 each coordinate Mg(2+). The KH domain maps to 552–611; that stretch reads PRIYTMKIDPKKIKDVIGKGGATIRTLTEETGTSIDIDDDGTVKIAAIDGNAVKEVMARI. Residues 621 to 689 enclose the S1 motif domain; the sequence is GAVYTGKVTR…RQGRIRLTMK (69 aa).

The protein belongs to the polyribonucleotide nucleotidyltransferase family. In terms of assembly, component of the RNA degradosome, which is a multiprotein complex involved in RNA processing and mRNA degradation. Requires Mg(2+) as cofactor.

It is found in the cytoplasm. The catalysed reaction is RNA(n+1) + phosphate = RNA(n) + a ribonucleoside 5'-diphosphate. Functionally, involved in mRNA degradation. Catalyzes the phosphorolysis of single-stranded polyribonucleotides processively in the 3'- to 5'-direction. The polypeptide is Polyribonucleotide nucleotidyltransferase (Actinobacillus succinogenes (strain ATCC 55618 / DSM 22257 / CCUG 43843 / 130Z)).